We begin with the raw amino-acid sequence, 383 residues long: Protein delta homolog 2 (383 aa).

Positions 1-26 (MPSGCRCLHLVCLLCILGAPGQPVRA) are cleaved as a signal peptide. EGF-like domains follow at residues 27-58 (DDCSSHCDLAHGCCAPDGSCRCDPGWEGLHCE), 62-89 (RMPGCQHGTCHQPWQCICHSGWAGKFCD), 91-129 (DEHICTTQSPCQNGGQCMYDGGGEYHCVCLPGFHGRDCE), and 131-172 (KAGP…ARCE). The Extracellular segment spans residues 27–306 (DDCSSHCDLA…RQEAGLGEPS (280 aa)). 17 disulfides stabilise this stretch: C29–C40, C33–C46, C48–C57, C66–C71, C79–C88, C95–C107, C101–C117, C119–C128, C135–C148, C142–C160, C162–C171, C178–C189, C183–C198, C200–C209, C216–C227, C221–C236, and C238–C247. A glycan (N-linked (GlcNAc...) asparagine) is linked at N157. The region spanning 174–210 (NVDDCLMRPCANGATCLDGINRFSCLCPEGFAGRFCT) is the EGF-like 5; calcium-binding domain. The 37-residue stretch at 212–248 (NLDDCASRPCQRGARCRDRVHDFDCLCPSGYGGKTCE) folds into the EGF-like 6; calcium-binding domain. The chain crosses the membrane as a helical span at residues 307–327 (LVALVVFGALTAALVLATVLL). Topologically, residues 328 to 383 (TLRAWRRGVCPPGPCCYPAPHYAPACQDQECQVSMLPAGLPLPRDLPPEPGKTTAL) are cytoplasmic.

It is found in the membrane. In terms of biological role, regulates adipogenesis. The chain is Protein delta homolog 2 (DLK2) from Homo sapiens (Human).